Here is a 99-residue protein sequence, read N- to C-terminus: Small ribosomal subunit protein bS20 (99 aa).

It belongs to the bacterial ribosomal protein bS20 family.

Its function is as follows. Binds directly to 16S ribosomal RNA. This is Small ribosomal subunit protein bS20 from Chlamydia pneumoniae (Chlamydophila pneumoniae).